Reading from the N-terminus, the 192-residue chain is UPF0301 protein Jann_3896 (192 aa).

This sequence belongs to the UPF0301 (AlgH) family.

The protein is UPF0301 protein Jann_3896 of Jannaschia sp. (strain CCS1).